Consider the following 320-residue polypeptide: Porphobilinogen deaminase (320 aa).

An S-(dipyrrolylmethanemethyl)cysteine modification is found at Cys-241.

This sequence belongs to the HMBS family. In terms of assembly, monomer. Dipyrromethane is required as a cofactor.

The catalysed reaction is 4 porphobilinogen + H2O = hydroxymethylbilane + 4 NH4(+). Its pathway is porphyrin-containing compound metabolism; protoporphyrin-IX biosynthesis; coproporphyrinogen-III from 5-aminolevulinate: step 2/4. Functionally, tetrapolymerization of the monopyrrole PBG into the hydroxymethylbilane pre-uroporphyrinogen in several discrete steps. The chain is Porphobilinogen deaminase from Thermobifida fusca (strain YX).